The chain runs to 580 residues: Arginine--tRNA ligase (580 aa).

Positions 131-141 (ANPTGPLHVGH) match the 'HIGH' region motif.

It belongs to the class-I aminoacyl-tRNA synthetase family. In terms of assembly, monomer.

Its subcellular location is the cytoplasm. It carries out the reaction tRNA(Arg) + L-arginine + ATP = L-arginyl-tRNA(Arg) + AMP + diphosphate. This Roseobacter denitrificans (strain ATCC 33942 / OCh 114) (Erythrobacter sp. (strain OCh 114)) protein is Arginine--tRNA ligase.